We begin with the raw amino-acid sequence, 123 residues long: WAP four-disulfide core domain protein 5 (123 aa).

A signal peptide spans M1 to G24. WAP domains lie at K27–V74 and S75–A121. Intrachain disulfides connect C34–C62, C41–C66, C49–C61, C55–C70, C81–C109, C88–C113, C96–C108, and C102–C117.

It localises to the secreted. In terms of biological role, putative acid-stable proteinase inhibitor. This is WAP four-disulfide core domain protein 5 (WFDC5) from Gorilla gorilla gorilla (Western lowland gorilla).